Here is a 332-residue protein sequence, read N- to C-terminus: Tetraacyldisaccharide 4'-kinase (332 aa).

Position 60-67 (60-67) interacts with ATP; sequence TVGGTGKT.

It belongs to the LpxK family.

It catalyses the reaction a lipid A disaccharide + ATP = a lipid IVA + ADP + H(+). It functions in the pathway glycolipid biosynthesis; lipid IV(A) biosynthesis; lipid IV(A) from (3R)-3-hydroxytetradecanoyl-[acyl-carrier-protein] and UDP-N-acetyl-alpha-D-glucosamine: step 6/6. Functionally, transfers the gamma-phosphate of ATP to the 4'-position of a tetraacyldisaccharide 1-phosphate intermediate (termed DS-1-P) to form tetraacyldisaccharide 1,4'-bis-phosphate (lipid IVA). The protein is Tetraacyldisaccharide 4'-kinase of Pseudomonas paraeruginosa (strain DSM 24068 / PA7) (Pseudomonas aeruginosa (strain PA7)).